A 165-amino-acid polypeptide reads, in one-letter code: Ubiquitin-conjugating enzyme E2 G2 (165 aa).

Alanine 2 carries the post-translational modification N-acetylalanine. In terms of domain architecture, UBC core spans 4–164; that stretch reads TALKRLMAEY…AKQIVQKSLG (161 aa). Catalysis depends on cysteine 89, which acts as the Glycyl thioester intermediate.

It belongs to the ubiquitin-conjugating enzyme family. As to quaternary structure, interacts with AUP1 (via C-terminus); the interaction recruits UBE2G2 to lipid droplets. Interacts with ubiquitin ligases AMFR/gp78 and RNF139/TRC8; recruitment to lipid droplets by AUP1 facilitates interaction of UBE2G2 with AMFR and RNF139, leading to sterol-induced ubiquitination of 3-hydroxy-3-methylglutaryl coenzyme A reductase and its subsequent proteasomal degradation.

It localises to the endoplasmic reticulum. Its subcellular location is the lipid droplet. It carries out the reaction S-ubiquitinyl-[E1 ubiquitin-activating enzyme]-L-cysteine + [E2 ubiquitin-conjugating enzyme]-L-cysteine = [E1 ubiquitin-activating enzyme]-L-cysteine + S-ubiquitinyl-[E2 ubiquitin-conjugating enzyme]-L-cysteine.. The protein operates within protein modification; protein ubiquitination. Accepts ubiquitin from the E1 complex and catalyzes its covalent attachment to other proteins. In vitro catalyzes 'Lys-48'-linked polyubiquitination. Involved in endoplasmic reticulum-associated degradation (ERAD). Required for sterol-induced ubiquitination of 3-hydroxy-3-methylglutaryl coenzyme A reductase and its subsequent proteasomal degradation. The protein is Ubiquitin-conjugating enzyme E2 G2 of Homo sapiens (Human).